Here is a 507-residue protein sequence, read N- to C-terminus: Phosphoprotein (507 aa).

The interval 1 to 48 is interaction with N0; that stretch reads MAEEQARHVKNGLECIRALKAEPIGSLAIGEAMAAWSEISDNPGQEQA. 4 disordered regions span residues 40–98, 134–174, 201–231, and 251–305; these read SDNP…FPSR, GLDG…APIS, NNFP…IKKG, and ATQC…KGGD. At serine 86 the chain carries Phosphoserine. A compositionally biased stretch (low complexity) spans 134–145; sequence GLDGDSTLSGGD. Over residues 146-160 the composition is skewed to acidic residues; sequence NESENSDVDIGEPDT. Serine 151 carries the post-translational modification Phosphoserine. Residues 260-270 show a composition bias toward low complexity; that stretch reads SEPSGPGAPAG. Polar residues predominate over residues 279–300; the sequence is AALTQEWTPESGTTISPRSQNK. The segment at 304–376 is multimerization; the sequence is GDYYDDELFS…LSSIMIAIPG (73 aa). Interaction with the L polymerase stretches follow at residues 361-377 and 396-410; these read STLE…IPGL and PIIG…AEVL. The tract at residues 457–507 is x domain (XD); it reads GPASRSVIRSIIKSSRIEEDRKRYLMTLLDDIKGANDLAKFHQMLMKIIMK. Positions 459-507 are interaction with the nucleocapsid (N-RNA); that stretch reads ASRSVIRSIIKSSRIEEDRKRYLMTLLDDIKGANDLAKFHQMLMKIIMK.

Belongs to the morbillivirus P protein family. As to quaternary structure, homotetramer. Interacts (via multimerization domain and XD domain) with polymerase L; this interaction forms the polymerase L-P complex. Interacts (via N-terminus) with N0 (via Ncore); this interaction allows P to chaperon N0 to avoid N polymerization and non-specific RNA binding before encapsidation. Interacts (via C-terminus) with N-RNA template (via Ntail); this interaction maintains the P/L complex anchored to the nucleocapsid template during the sequential transcription. Interacts (via C-terminus) with protein C this interaction allows C to associate with the ribonucleocapsid. Phosphorylation on serines by host CK2 is necessary for the formation of viral factories.

Essential cofactor of the RNA polymerase L that plays a central role in the transcription and replication by forming the polymerase complex with RNA polymerase L and recruiting L to the genomic N-RNA template for RNA synthesis. Also plays a central role in the encapsidation of nascent RNA chains by forming the encapsidation complex with the nucleocapsid protein N (N-P complex). Acts as a chaperone for newly synthesized free N protein, so-called N0, allowing encapsidation of nascent RNA chains during replication. The nucleoprotein protein N prevents excessive phosphorylation of P, which leads to down-regulation of viral transcription/ replication. Participates, together with N, in the formation of viral factories (viroplasms), which are large inclusions in the host cytoplasm where replication takes place. This Homo sapiens (Human) protein is Phosphoprotein (P/V).